The following is a 146-amino-acid chain: Angiogenin (146 aa).

The first 24 residues, 1 to 24 (MVMGLHLLLLVFILGLGLTPPTLA), serve as a signal peptide directing secretion. Gln25 is subject to Pyrrolidone carboxylic acid. His37 (proton acceptor) is an active-site residue. Disulfide bonds link Cys50/Cys105, Cys63/Cys116, and Cys81/Cys131. Residues 55-59 (RLRNM) carry the Nucleolar localization signal motif. Cys105 is a tRNA binding site. The active-site Proton donor is the His138.

This sequence belongs to the pancreatic ribonuclease family. As to quaternary structure, homodimer. Interacts with RNH1; inhibiting ANG ribonuclease activity. Interacts with PCNA.

It localises to the secreted. The protein resides in the nucleus. It is found in the nucleolus. The protein localises to the cytoplasm. Its subcellular location is the stress granule. Has weak tRNA ribonuclease activity by itself due to partial autoinhibition by its C-terminus, which folds into a short alpha-helix that partially occludes the substrate-binding site. In absence of stress, the ribonuclease activity is inhibited by RNH1 in the cytoplasm. In response to stress, dissociates from RNH1 in the cytoplasm and associates with cytoplasmic ribosomes with vacant A-sites: ribosomes directly activate the tRNA ribonuclease activity of ANG by refolding the C-terminal alpha-helix. In response to stress, the angiogenic activity of ANG is inhibited by RNH1 in the nucleus. Its function is as follows. Secreted ribonuclease that can either promote or restrict cell proliferation of target cells, depending on the context. Endocytosed in target cells via its receptor PLXNB2 and translocates to the cytoplasm or nucleus. Under stress conditions, localizes to the cytoplasm and promotes the assembly of stress granules (SGs): specifically cleaves a subset of tRNAs within anticodon loops to produce tRNA-derived stress-induced fragments (tiRNAs), resulting in translation repression and inhibition of cell proliferation. tiRNas also prevent formation of apoptosome, thereby promoting cell survival. Preferentially cleaves RNAs between a pyrimidine and an adenosine residue, suggesting that it cleaves the anticodon loop of tRNA(Ala) (32-UUAGCAU-38) after positions 33 and 36. Cleaves a subset of tRNAs, including tRNA(Ala), tRNA(Glu), tRNA(Gly), tRNA(Lys), tRNA(Val), tRNA(His), tRNA(Asp) and tRNA(Sec). Under growth conditions and in differentiated cells, translocates to the nucleus and stimulates ribosomal RNA (rRNA) transcription, including that containing the initiation site sequences of 45S rRNA, thereby promoting cell growth and proliferation. Angiogenin induces vascularization of normal and malignant tissues via its ability to promote rRNA transcription. Involved in hematopoietic stem and progenitor cell (HSPC) growth and survival by promoting rRNA transcription in growth conditions and inhibiting translation in response to stress, respectively. Mediates the crosstalk between myeloid and intestinal epithelial cells to protect the intestinal epithelial barrier integrity: secreted by myeloid cells and promotes intestinal epithelial cells proliferation and survival. Also mediates osteoclast-endothelial cell crosstalk in growing bone: produced by osteoclasts and protects the neighboring vascular cells against senescence by promoting rRNA transcription. The protein is Angiogenin (ANG) of Aotus trivirgatus (Three-striped night monkey).